The chain runs to 86 residues: Defensin-like protein a (86 aa).

The N-terminal stretch at methionine 1–glycine 23 is a signal peptide. Intrachain disulfides connect cysteine 33–cysteine 81, cysteine 43–cysteine 67, cysteine 51–cysteine 76, and cysteine 65–cysteine 78.

This sequence belongs to the DEFL family. As to expression, expressed specifically in anthers.

The protein resides in the secreted. Functionally, involved in self-incompatibility. In Arabidopsis lyrata (Lyre-leaved rock-cress), this protein is Defensin-like protein a (SCRa).